A 1406-amino-acid chain; its full sequence is Protein FAM135B (1406 aa).

Disordered regions lie at residues tryptophan 519–alanine 548 and serine 770–glycine 820. Residues serine 777 and serine 778 each carry the phosphoserine modification. Positions lysine 804–cysteine 816 are enriched in polar residues.

The protein belongs to the FAM135 family.

In Homo sapiens (Human), this protein is Protein FAM135B (FAM135B).